We begin with the raw amino-acid sequence, 104 residues long: ATP-dependent Clp protease adapter protein ClpS (104 aa).

This sequence belongs to the ClpS family. In terms of assembly, binds to the N-terminal domain of the chaperone ClpA.

Involved in the modulation of the specificity of the ClpAP-mediated ATP-dependent protein degradation. This is ATP-dependent Clp protease adapter protein ClpS from Burkholderia ambifaria (strain MC40-6).